The sequence spans 205 residues: Proteasome subunit beta type-3 (205 aa).

Phosphoserine is present on serine 31. Lysine 70 is covalently cross-linked (Glycyl lysine isopeptide (Lys-Gly) (interchain with G-Cter in ubiquitin)).

It belongs to the peptidase T1B family. In terms of assembly, the 26S proteasome consists of a 20S proteasome core and two 19S regulatory subunits. The 20S proteasome core is composed of 28 subunits that are arranged in four stacked rings, resulting in a barrel-shaped structure. The two end rings are each formed by seven alpha subunits, and the two central rings are each formed by seven beta subunits. The catalytic chamber with the active sites is on the inside of the barrel.

The protein resides in the cytoplasm. It is found in the nucleus. Its function is as follows. Non-catalytic component of the proteasome which degrades poly-ubiquitinated proteins in the cytoplasm and in the nucleus. It is essential for the regulated turnover of proteins and for the removal of misfolded proteins. The proteasome is a multicatalytic proteinase complex that is characterized by its ability to cleave peptides with Arg, Phe, Tyr, Leu, and Glu adjacent to the leaving group at neutral or slightly basic pH. It has an ATP-dependent proteolytic activity. This subunit may participate in the trypsin-like activity of the enzyme complex. The polypeptide is Proteasome subunit beta type-3 (PUP3) (Saccharomyces cerevisiae (strain ATCC 204508 / S288c) (Baker's yeast)).